We begin with the raw amino-acid sequence, 251 residues long: Hydroxyacylglutathione hydrolase (251 aa).

The Zn(2+) site is built by His53, His55, Asp57, His58, His110, Asp127, and His165.

This sequence belongs to the metallo-beta-lactamase superfamily. Glyoxalase II family. Monomer. It depends on Zn(2+) as a cofactor.

The enzyme catalyses an S-(2-hydroxyacyl)glutathione + H2O = a 2-hydroxy carboxylate + glutathione + H(+). The protein operates within secondary metabolite metabolism; methylglyoxal degradation; (R)-lactate from methylglyoxal: step 2/2. In terms of biological role, thiolesterase that catalyzes the hydrolysis of S-D-lactoyl-glutathione to form glutathione and D-lactic acid. This Erwinia tasmaniensis (strain DSM 17950 / CFBP 7177 / CIP 109463 / NCPPB 4357 / Et1/99) protein is Hydroxyacylglutathione hydrolase.